Consider the following 148-residue polypeptide: 3-dehydroquinate dehydratase (148 aa).

Catalysis depends on Tyr-23, which acts as the Proton acceptor. Substrate is bound by residues Asn-75, His-81, and Asp-88. His-101 functions as the Proton donor in the catalytic mechanism. Residues 102 to 103 (LS) and Arg-112 contribute to the substrate site.

It belongs to the type-II 3-dehydroquinase family. Homododecamer.

It carries out the reaction 3-dehydroquinate = 3-dehydroshikimate + H2O. The protein operates within metabolic intermediate biosynthesis; chorismate biosynthesis; chorismate from D-erythrose 4-phosphate and phosphoenolpyruvate: step 3/7. Its function is as follows. Catalyzes a trans-dehydration via an enolate intermediate. The polypeptide is 3-dehydroquinate dehydratase (Halorhodospira halophila (strain DSM 244 / SL1) (Ectothiorhodospira halophila (strain DSM 244 / SL1))).